We begin with the raw amino-acid sequence, 107 residues long: Glutaconyl-CoA decarboxylase subunit delta (107 aa).

A helical membrane pass occupies residues 10 to 32; sequence MINMTIVFGVLIVLGILMVLIHA. The interval 37–60 is disordered; sequence KKVQGKKKPVVAKPAPSAAASKRQ. Residues 47–57 are compositionally biased toward low complexity; that stretch reads VAKPAPSAAAS.

It belongs to the OadG family. As to quaternary structure, heterooctamer consisting of two alpha, two beta, two gamma and two delta subunits.

The protein resides in the cell membrane. The catalysed reaction is (2E)-glutaconyl-CoA + Na(+)(in) + H(+) = (2E)-butenoyl-CoA + Na(+)(out) + CO2. It functions in the pathway amino-acid degradation; L-glutamate degradation via hydroxyglutarate pathway; crotonoyl-CoA from L-glutamate: step 5/5. In terms of biological role, part of the primary sodium pump glutaconyl-CoA decarboxylase (GCD). Possible membrane anchor for the alpha subunit. This chain is Glutaconyl-CoA decarboxylase subunit delta (gcdD), found in Acidaminococcus fermentans (strain ATCC 25085 / DSM 20731 / CCUG 9996 / CIP 106432 / VR4).